Reading from the N-terminus, the 885-residue chain is Envelope glycoprotein gp160 (885 aa).

The signal sequence occupies residues 1-23 (MGCLGNQLLIALLLVSVLEICCV). Residues 24-700 (QYVTVFYGVP…TSWIRYIQYG (677 aa)) are Extracellular-facing. N-linked (GlcNAc...) asparagine; by host glycosylation is present at Asn37. Cys44 and Cys57 are disulfide-bonded. N-linked (GlcNAc...) asparagine; by host glycans are attached at residues Asn70, Asn114, Asn148, Asn156, Asn173, Asn186, Asn201, Asn213, Asn245, Asn255, Asn279, Asn285, Asn296, Asn307, Asn317, Asn372, and Asn378. Intrachain disulfides connect Cys101–Cys221, Cys108–Cys212, Cys113–Cys170, Cys234–Cys264, and Cys244–Cys256. Positions 113–169 (CNKTETDRWGLTGNAGTTTTAITTTATPSVAENVINESNPCIKNNSCAGLEQEPMIG) are V1. The tract at residues 170 to 212 (CKFNMTGLNRDKKKEYNETWYSRDLICEQSANESESKCYMHHC) is V2. The interval 312 to 344 (CRRPENKTVLPVTIMSGLVFHSQPINERPKQAW) is V3. Cysteines 312 and 345 form a disulfide. 2 disulfides stabilise this stretch: Cys396-Cys465 and Cys403-Cys438. Residues 403–438 (CKMNWFLNWVEDRDQKGGRWKQQNRKEQQKKNYVPC) form a V4 region. 3 N-linked (GlcNAc...) asparagine; by host glycosylation sites follow: Asn466, Asn482, and Asn485. The segment at 481–488 (SNETNITM) is V5. A fusion peptide region spans residues 532-552 (GVFVLGFLGFLATAGSAMGAA). The immunosuppression stretch occupies residues 595–611 (LQTRVTAIEKYLKDQAQ). Asn631, Asn640, and Asn656 each carry an N-linked (GlcNAc...) asparagine; by host glycan. Residues 640-672 (NMTWQEWERQVDFLEANITQLLEEAQIQQEKNM) adopt a coiled-coil conformation. The interval 677–698 (KLNSWDIFGNWFDLTSWIRYIQ) is MPER; binding to GalCer. Residues 701–721 (VLIVLGVIGLRIVIYVVQMLA) traverse the membrane as a helical segment. Residues 722 to 885 (RLRQGYRPVF…IRQGLELTLL (164 aa)) are Cytoplasmic-facing. A YXXV motif; contains endocytosis signal motif is present at residues 727–730 (YRPV). The tract at residues 743–764 (IHKGQEPPTKEGEEGDGGDRGG) is disordered. The span at 745–764 (KGQEPPTKEGEEGDGGDRGG) shows a compositional bias: basic and acidic residues. Cys793 carries S-palmitoyl cysteine; by host lipidation. Positions 884 to 885 (LL) match the Di-leucine internalization motif motif.

The mature envelope protein (Env) consists of a homotrimer of non-covalently associated gp120-gp41 heterodimers. The resulting complex protrudes from the virus surface as a spike. Interacts with host CD4 and CCR5. Gp120 also interacts with the C-type lectins CD209/DC-SIGN and CLEC4M/DC-SIGNR (collectively referred to as DC-SIGN(R)). In terms of assembly, the mature envelope protein (Env) consists of a homotrimer of non-covalently associated gp120-gp41 heterodimers. The resulting complex protrudes from the virus surface as a spike. Specific enzymatic cleavages in vivo yield mature proteins. Envelope glycoproteins are synthesized as an inactive precursor that is heavily N-glycosylated and processed likely by host cell furin in the Golgi to yield the mature SU and TM proteins. The cleavage site between SU and TM requires the minimal sequence [KR]-X-[KR]-R. In terms of processing, palmitoylation of the transmembrane protein and of Env polyprotein (prior to its proteolytic cleavage) is essential for their association with host cell membrane lipid rafts. Palmitoylation is therefore required for envelope trafficking to classical lipid rafts, but not for viral replication.

It is found in the virion membrane. The protein resides in the host cell membrane. The protein localises to the host endosome membrane. The surface protein gp120 (SU) attaches the virus to the host lymphoid cell by binding to the primary receptor CD4. This interaction induces a structural rearrangement creating a high affinity binding site for a chemokine coreceptor like CCR5. This peculiar 2 stage receptor-interaction strategy allows gp120 to maintain the highly conserved coreceptor-binding site in a cryptic conformation, protected from neutralizing antibodies. These changes are transmitted to the transmembrane protein gp41 and are thought to activate its fusogenic potential by unmasking its fusion peptide. In terms of biological role, surface protein gp120 (SU) may target the virus to gut-associated lymphoid tissue (GALT) by binding host ITGA4/ITGB7 (alpha-4/beta-7 integrins), a complex that mediates T-cell migration to the GALT. Interaction between gp120 and ITGA4/ITGB7 would allow the virus to enter GALT early in the infection, infecting and killing most of GALT's resting CD4+ T-cells. This T-cell depletion is believed to be the major insult to the host immune system leading to AIDS. Functionally, the surface protein gp120 is a ligand for CD209/DC-SIGN and CLEC4M/DC-SIGNR, which are respectively found on dendritic cells (DCs), and on endothelial cells of liver sinusoids and lymph node sinuses. These interactions allow capture of viral particles at mucosal surfaces by these cells and subsequent transmission to permissive cells. DCs are professional antigen presenting cells, critical for host immunity by inducing specific immune responses against a broad variety of pathogens. They act as sentinels in various tissues where they take up antigen, process it, and present it to T-cells following migration to lymphoid organs. SIV subverts the migration properties of dendritic cells to gain access to CD4+ T-cells in lymph nodes. Virus transmission to permissive T-cells occurs either in trans (without DCs infection, through viral capture and transmission), or in cis (following DCs productive infection, through the usual CD4-gp120 interaction), thereby inducing a robust infection. In trans infection, bound virions remain infectious over days and it is proposed that they are not degraded, but protected in non-lysosomal acidic organelles within the DCs close to the cell membrane thus contributing to the viral infectious potential during DCs' migration from the periphery to the lymphoid tissues. On arrival at lymphoid tissues, intact virions recycle back to DCs' cell surface allowing virus transmission to CD4+ T-cells. Virion capture also seems to lead to MHC-II-restricted viral antigen presentation, and probably to the activation of SIV-specific CD4+ cells. Its function is as follows. The transmembrane protein gp41 (TM) acts as a class I viral fusion protein. Under the current model, the protein has at least 3 conformational states: pre-fusion native state, pre-hairpin intermediate state, and post-fusion hairpin state. During fusion of viral and target intracellular membranes, the coiled coil regions (heptad repeats) assume a trimer-of-hairpins structure, positioning the fusion peptide in close proximity to the C-terminal region of the ectodomain. The formation of this structure appears to drive apposition and subsequent fusion of viral and target cell membranes. Complete fusion occurs in host cell endosomes. The virus undergoes clathrin-dependent internalization long before endosomal fusion, thus minimizing the surface exposure of conserved viral epitopes during fusion and reducing the efficacy of inhibitors targeting these epitopes. Membranes fusion leads to delivery of the nucleocapsid into the cytoplasm. The envelope glycoprotein gp160 precursor down-modulates cell surface CD4 antigen by interacting with it in the endoplasmic reticulum and blocking its transport to the cell surface. In terms of biological role, the gp120-gp41 heterodimer allows rapid transcytosis of the virus through CD4 negative cells such as simple epithelial monolayers of the intestinal, rectal and endocervical epithelial barriers. Both gp120 and gp41 specifically recognize glycosphingolipids galactosyl-ceramide (GalCer) or 3' sulfo-galactosyl-ceramide (GalS) present in the lipid rafts structures of epithelial cells. Binding to these alternative receptors allows the rapid transcytosis of the virus through the epithelial cells. This transcytotic vesicle-mediated transport of virions from the apical side to the basolateral side of the epithelial cells does not involve infection of the cells themselves. The polypeptide is Envelope glycoprotein gp160 (env) (Cercopithecidae (Old World monkeys)).